We begin with the raw amino-acid sequence, 417 residues long: FK506-binding protein 3 (417 aa).

Disordered regions lie at residues 42-129 (SLDD…LSPE) and 191-307 (EGCG…DKPK). 3 stretches are compositionally biased toward acidic residues: residues 61 to 84 (FDDEDDLLADSEEEEEEESEEESE), 99 to 120 (SEEEDSEEEDSEGEDSDDEFEE), and 197 to 222 (CACDDDSDYDLTPDEEDILDMEDASD). Basic and acidic residues-rich tracts occupy residues 236-249 (ANEKRKADEDEPKA) and 256-307 (DQKD…DKPK). One can recognise a PPIase FKBP-type domain in the interval 331 to 417 (GARVGMRYIG…TFDVKLVSLK (87 aa)).

This sequence belongs to the FKBP-type PPIase family. FKBP3/4 subfamily.

It localises to the nucleus. The protein resides in the nucleolus. The enzyme catalyses [protein]-peptidylproline (omega=180) = [protein]-peptidylproline (omega=0). Inhibited by both FK506 and rapamycin. PPIases accelerate the folding of proteins. It catalyzes the cis-trans isomerization of proline imidic peptide bonds in oligopeptides. The polypeptide is FK506-binding protein 3 (FPR3) (Eremothecium gossypii (strain ATCC 10895 / CBS 109.51 / FGSC 9923 / NRRL Y-1056) (Yeast)).